The sequence spans 91 residues: Small ribosomal subunit protein bS16 (91 aa).

It belongs to the bacterial ribosomal protein bS16 family.

This chain is Small ribosomal subunit protein bS16, found in Limosilactobacillus reuteri (strain DSM 20016) (Lactobacillus reuteri).